Reading from the N-terminus, the 358-residue chain is Mannonate dehydratase (358 aa).

It belongs to the mannonate dehydratase family. The cofactor is Fe(2+). Requires Mn(2+) as cofactor.

The enzyme catalyses D-mannonate = 2-dehydro-3-deoxy-D-gluconate + H2O. The protein operates within carbohydrate metabolism; pentose and glucuronate interconversion. Functionally, catalyzes the dehydration of D-mannonate. This chain is Mannonate dehydratase, found in Shouchella clausii (strain KSM-K16) (Alkalihalobacillus clausii).